The chain runs to 609 residues: UvrABC system protein C (609 aa).

The region spanning 16-94 is the GIY-YIG domain; the sequence is SSAGVYRMYD…IKQYMPKYNV (79 aa). The region spanning 203 to 238 is the UVR domain; sequence KQVISELVAKMEEAAEQQAYEQAARFRDQIMALRRV.

It belongs to the UvrC family. As to quaternary structure, interacts with UvrB in an incision complex.

It localises to the cytoplasm. The UvrABC repair system catalyzes the recognition and processing of DNA lesions. UvrC both incises the 5' and 3' sides of the lesion. The N-terminal half is responsible for the 3' incision and the C-terminal half is responsible for the 5' incision. In Shewanella sp. (strain MR-4), this protein is UvrABC system protein C.